A 373-amino-acid polypeptide reads, in one-letter code: 2-aminoethylphosphonate--pyruvate transaminase (373 aa).

N6-(pyridoxal phosphate)lysine is present on lysine 191.

Belongs to the class-V pyridoxal-phosphate-dependent aminotransferase family. PhnW subfamily. As to quaternary structure, homodimer. Requires pyridoxal 5'-phosphate as cofactor.

The enzyme catalyses (2-aminoethyl)phosphonate + pyruvate = phosphonoacetaldehyde + L-alanine. In terms of biological role, involved in phosphonate degradation. The sequence is that of 2-aminoethylphosphonate--pyruvate transaminase from Burkholderia ambifaria (strain MC40-6).